A 376-amino-acid polypeptide reads, in one-letter code: TelA-like protein SERP0976 (376 aa).

This sequence belongs to the TelA family.

The chain is TelA-like protein SERP0976 from Staphylococcus epidermidis (strain ATCC 35984 / DSM 28319 / BCRC 17069 / CCUG 31568 / BM 3577 / RP62A).